The primary structure comprises 193 residues: MEPFRIHKGTAAVLMNDNIDTDQIIPKQYLKRIERTGFGKFLFDEWRYDNERHENPNFPLNSPDRKGASILITGNNFGCGSSREHAPWALADYGFRVIIAGGFADIFYMNCMKNGMLPIVMDKEMREKLVKTDAREQIEVDLENEVITTSTHRFHFTIEKMWKEKLLNGLDEISITMQYEQEIKEYERRVAAY.

The protein belongs to the LeuD family. LeuD type 1 subfamily. In terms of assembly, heterodimer of LeuC and LeuD.

It catalyses the reaction (2R,3S)-3-isopropylmalate = (2S)-2-isopropylmalate. The protein operates within amino-acid biosynthesis; L-leucine biosynthesis; L-leucine from 3-methyl-2-oxobutanoate: step 2/4. Catalyzes the isomerization between 2-isopropylmalate and 3-isopropylmalate, via the formation of 2-isopropylmaleate. The polypeptide is 3-isopropylmalate dehydratase small subunit (Bacillus cereus (strain AH820)).